Consider the following 25-residue polypeptide: Panurgine R (25 aa).

Disulfide bonds link Cys8-Cys23 and Cys11-Cys19.

It localises to the target cell membrane. The protein resides in the secreted. In terms of biological role, antimicrobial peptide active against Gram-positive bacteria M.luteus (MIC=0.8 uM) and B.subtilis (MIC=1.5 uM). Less active against Gram-negative bacteria E.coli (MIC=32.5 uM) and yeast C.albicans (MIC=18.7 uM). Not active against S.aureus and P.aeruginosa. Has no hemolytic activity against human erythrocytes. Probably acts by disrupting membranes of target cells. The sequence is that of Panurgine R from Panurgus calcaratus (Solitary bee).